We begin with the raw amino-acid sequence, 213 residues long: Membrane-spanning 4-domains subfamily A member 3 (213 aa).

The Cytoplasmic portion of the chain corresponds to 1-26 (MKPEETGGSVYQPLDESRHVQRGVLQ). The chain crosses the membrane as a helical span at residues 27–47 (ALGAIQILNGILILALGIFLV). Residues 48 to 58 (CLQHVSHHFRH) are Extracellular-facing. The chain crosses the membrane as a helical span at residues 59-79 (FFFFTFYTGYPLWGAVFFISS). Residues 80 to 97 (GSLTVAAGRNPTRMLMQN) are Cytoplasmic-facing. The chain crosses the membrane as a helical span at residues 98 to 118 (SFGINIASTTIAFVGTVFLSV). Residues 119–148 (HLAFNTQAFKGCQSSPSPDVCISLGSSSDG) are Extracellular-facing. The helical transmembrane segment at 149-169 (LVSLMLILTLLELSVTISISA) threads the bilayer. Over 170 to 213 (MWCLGNVCGLREAITSPPNSVESGILPEGSDSENLNTQPQASEE) the chain is Cytoplasmic. A disordered region spans residues 189-213 (SVESGILPEGSDSENLNTQPQASEE). Over residues 201–213 (SENLNTQPQASEE) the composition is skewed to polar residues.

Belongs to the MS4A family. Interacts with CDKN3. Interacts with CDKN3-CDK2 complexes through its binding to CDKN3; this interaction facilitates dissociation of cyclin A from CDKN3-CDK2 complexes. Expressed at low levels only in specific immune tissues, such as, spleen, bone marrow and peripheral blood leukocytes.

The protein resides in the membrane. Hematopoietic modulator for the G1-S cell cycle transition. Modulates the level of phosphorylation of cyclin-dependent kinase 2 (CDK2) through its direct binding to cyclin-dependent kinase inhibitor 3 (CDKN3/KAP). This Mus musculus (Mouse) protein is Membrane-spanning 4-domains subfamily A member 3 (Ms4a3).